A 402-amino-acid chain; its full sequence is UPF0261 protein y4oU (402 aa).

The protein belongs to the UPF0261 family.

The chain is UPF0261 protein y4oU from Sinorhizobium fredii (strain NBRC 101917 / NGR234).